Here is a 262-residue protein sequence, read N- to C-terminus: Phosphonates import ATP-binding protein PhnC (262 aa).

In terms of domain architecture, ABC transporter spans 5–253; that stretch reads IRVEKLAKTF…RFDHLYRSIN (249 aa). 37–44 contacts ATP; sequence GPSGSGKS.

This sequence belongs to the ABC transporter superfamily. Phosphonates importer (TC 3.A.1.9.1) family. As to quaternary structure, the complex is composed of two ATP-binding proteins (PhnC), two transmembrane proteins (PhnE) and a solute-binding protein (PhnD).

The protein localises to the cell inner membrane. It catalyses the reaction phosphonate(out) + ATP + H2O = phosphonate(in) + ADP + phosphate + H(+). Functionally, part of the ABC transporter complex PhnCDE involved in phosphonates import. Responsible for energy coupling to the transport system. This chain is Phosphonates import ATP-binding protein PhnC, found in Shigella boydii serotype 4 (strain Sb227).